We begin with the raw amino-acid sequence, 376 residues long: Phosphoserine aminotransferase (376 aa).

Position 54 (Arg-54) interacts with L-glutamate. Residues 88–89 (AT), Trp-115, Thr-165, Asp-186, and Gln-209 each bind pyridoxal 5'-phosphate. The residue at position 210 (Lys-210) is an N6-(pyridoxal phosphate)lysine. 251–252 (NT) is a pyridoxal 5'-phosphate binding site.

It belongs to the class-V pyridoxal-phosphate-dependent aminotransferase family. SerC subfamily. As to quaternary structure, homodimer. It depends on pyridoxal 5'-phosphate as a cofactor.

Its subcellular location is the cytoplasm. It catalyses the reaction O-phospho-L-serine + 2-oxoglutarate = 3-phosphooxypyruvate + L-glutamate. The catalysed reaction is 4-(phosphooxy)-L-threonine + 2-oxoglutarate = (R)-3-hydroxy-2-oxo-4-phosphooxybutanoate + L-glutamate. It functions in the pathway amino-acid biosynthesis; L-serine biosynthesis; L-serine from 3-phospho-D-glycerate: step 2/3. The protein operates within cofactor biosynthesis; pyridoxine 5'-phosphate biosynthesis; pyridoxine 5'-phosphate from D-erythrose 4-phosphate: step 3/5. In terms of biological role, catalyzes the reversible conversion of 3-phosphohydroxypyruvate to phosphoserine and of 3-hydroxy-2-oxo-4-phosphonooxybutanoate to phosphohydroxythreonine. This is Phosphoserine aminotransferase from Rhodopirellula baltica (strain DSM 10527 / NCIMB 13988 / SH1).